A 338-amino-acid polypeptide reads, in one-letter code: Ketol-acid reductoisomerase (NADP(+)) (338 aa).

One can recognise a KARI N-terminal Rossmann domain in the interval 1-181 (MKVFYDKDCD…GGGKAGIIET (181 aa)). Residues 24–27 (YGSQ), arginine 47, and serine 52 each bind NADP(+). Histidine 107 is an active-site residue. Glycine 133 lines the NADP(+) pocket. In terms of domain architecture, KARI C-terminal knotted spans 182-327 (NFKEETETDL…AQLRAMMPWI (146 aa)). Mg(2+)-binding residues include aspartate 190, glutamate 194, glutamate 226, and glutamate 230. Position 251 (serine 251) interacts with substrate.

The protein belongs to the ketol-acid reductoisomerase family. It depends on Mg(2+) as a cofactor.

The enzyme catalyses (2R)-2,3-dihydroxy-3-methylbutanoate + NADP(+) = (2S)-2-acetolactate + NADPH + H(+). The catalysed reaction is (2R,3R)-2,3-dihydroxy-3-methylpentanoate + NADP(+) = (S)-2-ethyl-2-hydroxy-3-oxobutanoate + NADPH + H(+). It participates in amino-acid biosynthesis; L-isoleucine biosynthesis; L-isoleucine from 2-oxobutanoate: step 2/4. Its pathway is amino-acid biosynthesis; L-valine biosynthesis; L-valine from pyruvate: step 2/4. Functionally, involved in the biosynthesis of branched-chain amino acids (BCAA). Catalyzes an alkyl-migration followed by a ketol-acid reduction of (S)-2-acetolactate (S2AL) to yield (R)-2,3-dihydroxy-isovalerate. In the isomerase reaction, S2AL is rearranged via a Mg-dependent methyl migration to produce 3-hydroxy-3-methyl-2-ketobutyrate (HMKB). In the reductase reaction, this 2-ketoacid undergoes a metal-dependent reduction by NADPH to yield (R)-2,3-dihydroxy-isovalerate. The chain is Ketol-acid reductoisomerase (NADP(+)) from Acidovorax ebreus (strain TPSY) (Diaphorobacter sp. (strain TPSY)).